The chain runs to 470 residues: FAD-dependent monooxygenase nvfK (470 aa).

The N-terminal stretch at 1 to 23 (MEKAKFKVVIVGGSITGLTLAHC) is a signal peptide. Residues Glu35, Gly49, and Arg108 each coordinate FAD. Asn121 carries an N-linked (GlcNAc...) asparagine glycan. Tyr216 is an active-site residue. FAD-binding residues include Asp308 and Ala321. Residues 450 to 470 (ILMSIVLVAPAWVYIFSSLVW) traverse the membrane as a helical segment.

It belongs to the paxM FAD-dependent monooxygenase family. FAD serves as cofactor.

It is found in the membrane. It carries out the reaction (3R)-3-farnesyl-6-hydroxy-2,3,5-trimethyl-4-oxocyclohexa-1,5-diene-1-carboxylate + 2-oxoglutarate + O2 = (3R)-[(10S)-11-epoxyfarnesyl]-2,3,5-trimethyl-6-oxido-4-oxocyclohexa-1,5-diene-1-carboxylate + succinate + CO2. The protein operates within secondary metabolite biosynthesis; terpenoid biosynthesis. Its function is as follows. FAD-dependent monooxygenase; part of the gene cluster that mediates the biosynthesis of novofumigatonin, a heavily oxygenated meroterpenoid containing a unique orthoester moiety. The first step of the pathway is the synthesis of 3,5-dimethylorsellinic acid (DMOA) by the polyketide synthase nvfA via condensation of one acetyl-CoA starter unit with 3 malonyl-CoA units and 2 methylations. DMOA is then converted to farnesyl-DMOA by the farnesyltransferase nvfB. Epoxydation by FAD-dependent monooxygenase nvfK, followed by a protonation-initiated cyclization catalyzed by the terpene cyclase nvfL leads to the production of asnavolin H. The short chain dehydrogenase nvfC then as a 3-OH dehydrogenase of asnovolin H to yield chemesin D. There are two branches to synthesize asnovolin A from chemesin D. In one branch, chemesin D undergoes Baeyer-Villiger oxidation by nvfH, methylation by nvfJ, and enoyl reduction by the nvfM D enoylreductase that reduces the double bond between C-5'and C-6', to form respectively asnovolin I, asnovolin K, and asnovolin A. In the other branch, the methylation precedes the Baeyer-Villiger oxidation and the enoyl reduction to yield asnovolin A via the asnovolin J intermediate. Asnovolin A is further converted to fumigatonoid A by the Fe(II)/2-oxoglutarate-dependent dioxygenase nvfI that catalyzes an endoperoxidation reaction. The alpha/beta hydrolase nvfD then acts as an epimerase that converts fumigatonoid A to its C-5' epimer, which then undergoes spontaneous or nvfD-catalyzed lactonization. The following step utilizes the ketoreductase nvfG to produce fumigatonoid B. The dioxygenase nvfE further converts fumigatonoid B into fumigatonoid C. Finally the Fe(II)/2-oxoglutarate-dependent dioxygenase nvfF catalyzes two rounds of oxidation to transform fumigatonoid C into the end product, novofumigatonin A. This chain is FAD-dependent monooxygenase nvfK, found in Aspergillus novofumigatus (strain IBT 16806).